A 270-amino-acid polypeptide reads, in one-letter code: Diaminopimelate epimerase (270 aa).

3 residues coordinate substrate: Asn15, Gln49, and Asn66. Cys75 (proton donor) is an active-site residue. Residues 76 to 77, Asn155, Asn187, and 204 to 205 each bind substrate; these read GN and ER. Cys213 acts as the Proton acceptor in catalysis. 214–215 contributes to the substrate binding site; that stretch reads GS.

It belongs to the diaminopimelate epimerase family. In terms of assembly, homodimer.

The protein resides in the cytoplasm. It carries out the reaction (2S,6S)-2,6-diaminopimelate = meso-2,6-diaminopimelate. Its pathway is amino-acid biosynthesis; L-lysine biosynthesis via DAP pathway; DL-2,6-diaminopimelate from LL-2,6-diaminopimelate: step 1/1. Catalyzes the stereoinversion of LL-2,6-diaminopimelate (L,L-DAP) to meso-diaminopimelate (meso-DAP), a precursor of L-lysine and an essential component of the bacterial peptidoglycan. This is Diaminopimelate epimerase from Rickettsia massiliae (strain Mtu5).